The sequence spans 148 residues: Photosystem II extrinsic protein U, chloroplastic (148 aa).

The transit peptide at 1-32 (MKLAVFAVLISTVAAFVAPNGVQRAATTELNA) directs the protein to the chloroplast. The N-terminal 22 residues, 33-54 (ERREFLSAAAVAAGLAFPLTAN), are a transit peptide targeting the thylakoid.

The protein belongs to the PsbU family. As to quaternary structure, PSII is composed of 1 copy each of membrane proteins PsbA, PsbB, PsbC, PsbD, PsbE, PsbF, PsbH, PsbI, PsbJ, PsbK, PsbL, PsbM, PsbT, PsbX, PsbY, PsbZ, Psb30/Ycf12, at least 3 peripheral proteins of the oxygen-evolving complex and a large number of cofactors. It forms dimeric complexes. The oxygen-evolving complex may be composed of PsbO, PsbQ', PsbV and PsbU.

Its subcellular location is the plastid. The protein resides in the chloroplast thylakoid membrane. Its function is as follows. One of the extrinsic, lumenal subunits of photosystem II (PSII), which stabilize and protect the oxygen-evolving complex. PSII is a light-driven water plastoquinone oxidoreductase, using light energy to abstract electrons from H(2)O, generating a proton gradient subsequently used for ATP formation. Stabilizes the structure of photosystem II oxygen-evolving complex (OEC), the ion environment of oxygen evolution and protects the OEC against heat-induced inactivation. This Phaeodactylum tricornutum (Diatom) protein is Photosystem II extrinsic protein U, chloroplastic.